A 380-amino-acid polypeptide reads, in one-letter code: UDP-N-acetylglucosamine--N-acetylmuramyl-(pentapeptide) pyrophosphoryl-undecaprenol N-acetylglucosamine transferase (380 aa).

Residues 23 to 25 (TGG), N137, R178, S210, I266, and Q311 contribute to the UDP-N-acetyl-alpha-D-glucosamine site.

The protein belongs to the glycosyltransferase 28 family. MurG subfamily.

Its subcellular location is the cell inner membrane. The catalysed reaction is di-trans,octa-cis-undecaprenyl diphospho-N-acetyl-alpha-D-muramoyl-L-alanyl-D-glutamyl-meso-2,6-diaminopimeloyl-D-alanyl-D-alanine + UDP-N-acetyl-alpha-D-glucosamine = di-trans,octa-cis-undecaprenyl diphospho-[N-acetyl-alpha-D-glucosaminyl-(1-&gt;4)]-N-acetyl-alpha-D-muramoyl-L-alanyl-D-glutamyl-meso-2,6-diaminopimeloyl-D-alanyl-D-alanine + UDP + H(+). It participates in cell wall biogenesis; peptidoglycan biosynthesis. Its function is as follows. Cell wall formation. Catalyzes the transfer of a GlcNAc subunit on undecaprenyl-pyrophosphoryl-MurNAc-pentapeptide (lipid intermediate I) to form undecaprenyl-pyrophosphoryl-MurNAc-(pentapeptide)GlcNAc (lipid intermediate II). The protein is UDP-N-acetylglucosamine--N-acetylmuramyl-(pentapeptide) pyrophosphoryl-undecaprenol N-acetylglucosamine transferase of Bacteroides fragilis (strain ATCC 25285 / DSM 2151 / CCUG 4856 / JCM 11019 / LMG 10263 / NCTC 9343 / Onslow / VPI 2553 / EN-2).